Here is an 815-residue protein sequence, read N- to C-terminus: Putative transcription factor phnE (815 aa).

Residues 522 to 577 are disordered; it reads PSRRNSDGSAHSSPSSTPSSSSTSSPLPSPASERPPPLDVVTRPSTGTSTPSSPTL. Low complexity predominate over residues 523–547; it reads SRRNSDGSAHSSPSSTPSSSSTSSP. A compositionally biased stretch (pro residues) spans 548–559; sequence LPSPASERPPPL. Low complexity predominate over residues 563–577; that stretch reads TRPSTGTSTPSSPTL.

The protein resides in the nucleus. Its function is as follows. Putative transcription factor that may be involved in the regulation of the expression of the gene cluster that mediates the biosynthesis of phenalenones such as herqueinone, compounds that have been reported to treat tumors, bacterial infections and/or mycoses, and rheumatic diseases. The sequence is that of Putative transcription factor phnE from Penicillium herquei.